Reading from the N-terminus, the 228-residue chain is Carboxylesterase SOBER1 (228 aa).

Residues serine 106, aspartate 160, and histidine 192 each act as charge relay system in the active site.

It belongs to the AB hydrolase superfamily. AB hydrolase 2 family.

In terms of biological role, possesses carboxylesterase activity in vitro with a preference for short acyl chain substrates. Functions as a negative regulator of the hypersensitive response (HR) triggered by the bacterial type III effector protein AvrBsT. Possesses phospholipase A2 (PLA2) activity and hydrolyzes phosphatidylcholine (PC), a lipid that is hydrolyzed by phospholipase D (PLD) to produce phosphatidic acid (PA). Required to suppress AvrBsT-dependent HR and PLD-dependent production of PA in response to AvrBsT elicitation. This is Carboxylesterase SOBER1 from Arabidopsis thaliana (Mouse-ear cress).